Consider the following 344-residue polypeptide: Holliday junction branch migration complex subunit RuvB (344 aa).

The tract at residues 1–182 (MRIELLNTPP…FGINSRFDYY (182 aa)) is large ATPase domain (RuvB-L). ATP contacts are provided by residues Ile-21, Arg-22, Gly-63, Lys-66, Thr-67, Thr-68, 129–131 (EDF), Arg-172, Tyr-182, and Arg-219. Residue Thr-67 coordinates Mg(2+). The segment at 183-253 (APELLEGIIR…IAMKTLDCLE (71 aa)) is small ATPAse domain (RuvB-S). The tract at residues 256–344 (EEGLDDMDKK…ISLFDAQPTS (89 aa)) is head domain (RuvB-H). The DNA site is built by Arg-311 and Arg-316.

Belongs to the RuvB family. As to quaternary structure, homohexamer. Forms an RuvA(8)-RuvB(12)-Holliday junction (HJ) complex. HJ DNA is sandwiched between 2 RuvA tetramers; dsDNA enters through RuvA and exits via RuvB. An RuvB hexamer assembles on each DNA strand where it exits the tetramer. Each RuvB hexamer is contacted by two RuvA subunits (via domain III) on 2 adjacent RuvB subunits; this complex drives branch migration. In the full resolvosome a probable DNA-RuvA(4)-RuvB(12)-RuvC(2) complex forms which resolves the HJ.

It localises to the cytoplasm. The catalysed reaction is ATP + H2O = ADP + phosphate + H(+). Functionally, the RuvA-RuvB-RuvC complex processes Holliday junction (HJ) DNA during genetic recombination and DNA repair, while the RuvA-RuvB complex plays an important role in the rescue of blocked DNA replication forks via replication fork reversal (RFR). RuvA specifically binds to HJ cruciform DNA, conferring on it an open structure. The RuvB hexamer acts as an ATP-dependent pump, pulling dsDNA into and through the RuvAB complex. RuvB forms 2 homohexamers on either side of HJ DNA bound by 1 or 2 RuvA tetramers; 4 subunits per hexamer contact DNA at a time. Coordinated motions by a converter formed by DNA-disengaged RuvB subunits stimulates ATP hydrolysis and nucleotide exchange. Immobilization of the converter enables RuvB to convert the ATP-contained energy into a lever motion, pulling 2 nucleotides of DNA out of the RuvA tetramer per ATP hydrolyzed, thus driving DNA branch migration. The RuvB motors rotate together with the DNA substrate, which together with the progressing nucleotide cycle form the mechanistic basis for DNA recombination by continuous HJ branch migration. Branch migration allows RuvC to scan DNA until it finds its consensus sequence, where it cleaves and resolves cruciform DNA. In Pelodictyon phaeoclathratiforme (strain DSM 5477 / BU-1), this protein is Holliday junction branch migration complex subunit RuvB.